The chain runs to 396 residues: Phosphoglycerate kinase (396 aa).

Substrate contacts are provided by residues 22–24 (DFN), Arg37, 60–63 (HFGR), Arg118, and Arg151. Residues Lys201, Glu322, and 352–355 (GGDS) contribute to the ATP site.

The protein belongs to the phosphoglycerate kinase family. Monomer.

The protein resides in the cytoplasm. It catalyses the reaction (2R)-3-phosphoglycerate + ATP = (2R)-3-phospho-glyceroyl phosphate + ADP. It participates in carbohydrate degradation; glycolysis; pyruvate from D-glyceraldehyde 3-phosphate: step 2/5. The sequence is that of Phosphoglycerate kinase from Wolbachia pipientis subsp. Culex pipiens (strain wPip).